The following is a 387-amino-acid chain: Acetylornithine deacetylase (387 aa).

Histidine 80 contributes to the Zn(2+) binding site. Aspartate 82 is an active-site residue. Aspartate 112 is a Zn(2+) binding site. Glutamate 144 is a catalytic residue. Glutamate 145, glutamate 169, and histidine 355 together coordinate Zn(2+).

This sequence belongs to the peptidase M20A family. ArgE subfamily. As to quaternary structure, homodimer. Zn(2+) serves as cofactor. Requires Co(2+) as cofactor. It depends on glutathione as a cofactor.

It localises to the cytoplasm. The enzyme catalyses N(2)-acetyl-L-ornithine + H2O = L-ornithine + acetate. It participates in amino-acid biosynthesis; L-arginine biosynthesis; L-ornithine from N(2)-acetyl-L-ornithine (linear): step 1/1. In terms of biological role, catalyzes the hydrolysis of the amide bond of N(2)-acetylated L-amino acids. Cleaves the acetyl group from N-acetyl-L-ornithine to form L-ornithine, an intermediate in L-arginine biosynthesis pathway, and a branchpoint in the synthesis of polyamines. The protein is Acetylornithine deacetylase of Proteus mirabilis (strain HI4320).